The following is a 562-amino-acid chain: DNA-binding protein MutS2 (562 aa).

Residue 380–387 (GANSGGKT) coordinates ATP.

It belongs to the DNA mismatch repair MutS family. Archaeal Muts2 subfamily. Multimer. Co(2+) serves as cofactor. The cofactor is Mn(2+).

Has ATPase and non-specific DNA-binding activities. May be involved in recombination and/or recombinational repair. Not involved in mismatch repair. This chain is DNA-binding protein MutS2, found in Pyrococcus furiosus (strain ATCC 43587 / DSM 3638 / JCM 8422 / Vc1).